The primary structure comprises 327 residues: Beta-ketoacyl-[acyl-carrier-protein] synthase III (327 aa).

Residues cysteine 114 and histidine 254 contribute to the active site. The ACP-binding stretch occupies residues 255–259; it reads QANRR. Residue asparagine 284 is part of the active site.

Belongs to the thiolase-like superfamily. FabH family. Homodimer.

Its subcellular location is the cytoplasm. The catalysed reaction is malonyl-[ACP] + acetyl-CoA + H(+) = 3-oxobutanoyl-[ACP] + CO2 + CoA. It participates in lipid metabolism; fatty acid biosynthesis. Its function is as follows. Catalyzes the condensation reaction of fatty acid synthesis by the addition to an acyl acceptor of two carbons from malonyl-ACP. Catalyzes the first condensation reaction which initiates fatty acid synthesis and may therefore play a role in governing the total rate of fatty acid production. Possesses both acetoacetyl-ACP synthase and acetyl transacylase activities. Its substrate specificity determines the biosynthesis of branched-chain and/or straight-chain of fatty acids. In Lactobacillus helveticus (strain DPC 4571), this protein is Beta-ketoacyl-[acyl-carrier-protein] synthase III.